A 122-amino-acid chain; its full sequence is uncharacterized protein (122 aa).

Transmembrane regions (helical) follow at residues 43–63 (PIII…IFFI) and 76–96 (AVAD…ILYF).

The protein localises to the membrane. This is an uncharacterized protein from Schizosaccharomyces pombe (strain 972 / ATCC 24843) (Fission yeast).